Reading from the N-terminus, the 117-residue chain is Large ribosomal subunit protein bL20 (117 aa).

Belongs to the bacterial ribosomal protein bL20 family.

In terms of biological role, binds directly to 23S ribosomal RNA and is necessary for the in vitro assembly process of the 50S ribosomal subunit. It is not involved in the protein synthesizing functions of that subunit. The chain is Large ribosomal subunit protein bL20 from Rickettsia canadensis (strain McKiel).